Here is a 395-residue protein sequence, read N- to C-terminus: LIM/homeobox protein Lhx3 (395 aa).

LIM zinc-binding domains follow at residues 28–78 and 87–141; these read CAGC…CKDD and CAAC…CKAD. A DNA-binding region (homeobox) is located at residues 154–213; the sequence is AKRPRTTITAKQLETLKNAYNNSPKPARHVREQLSSETGLDMRVVQVWFQNRRAKEKRLK. Disordered stretches follow at residues 208–304 and 363–383; these read KEKR…QDQY and GPSSDLSTGSSGGYPDFPVSP. Residues 257–278 show a composition bias toward polar residues; sequence DEPSMSEMNHSNGIYNSLNDSS.

As to quaternary structure, interacts with ldb1 and with the N-terminus of rnf12. As to expression, in dorsal regions at neural tube and tailbud stages and in adults predominantly in the pituitary gland and weakly in the eye and brain.

It is found in the nucleus. In terms of biological role, transcription factor. May be involved in the specification and maintenance of differentiation of distinct neuronal and neuroendocrine tissues. Early marker for the pituitary and pineal lineages, it may be involved in specifying these lineages. The sequence is that of LIM/homeobox protein Lhx3 (lhx3) from Xenopus laevis (African clawed frog).